A 547-amino-acid chain; its full sequence is Phosphomethylpyrimidine synthase (547 aa).

A compositionally biased stretch (polar residues) spans Met1–Thr15. Residues Met1–Ser36 form a disordered region. Substrate is bound by residues Asn150, Met179, Tyr208, His244, Ser264–Gly266, Asp305–Arg308, and Glu344. A Zn(2+)-binding site is contributed by His348. Tyr371 is a binding site for substrate. His412 is a binding site for Zn(2+). [4Fe-4S] cluster-binding residues include Cys492, Cys495, and Cys500.

This sequence belongs to the ThiC family. Requires [4Fe-4S] cluster as cofactor.

It catalyses the reaction 5-amino-1-(5-phospho-beta-D-ribosyl)imidazole + S-adenosyl-L-methionine = 4-amino-2-methyl-5-(phosphooxymethyl)pyrimidine + CO + 5'-deoxyadenosine + formate + L-methionine + 3 H(+). Its pathway is cofactor biosynthesis; thiamine diphosphate biosynthesis. Catalyzes the synthesis of the hydroxymethylpyrimidine phosphate (HMP-P) moiety of thiamine from aminoimidazole ribotide (AIR) in a radical S-adenosyl-L-methionine (SAM)-dependent reaction. This Mycobacterium leprae (strain Br4923) protein is Phosphomethylpyrimidine synthase.